A 162-amino-acid polypeptide reads, in one-letter code: Protein-export protein SecB 2 (162 aa).

This sequence belongs to the SecB family. Homotetramer, a dimer of dimers. One homotetramer interacts with 1 SecA dimer.

It localises to the cytoplasm. Its function is as follows. One of the proteins required for the normal export of preproteins out of the cell cytoplasm. It is a molecular chaperone that binds to a subset of precursor proteins, maintaining them in a translocation-competent state. It also specifically binds to its receptor SecA. The polypeptide is Protein-export protein SecB 2 (Polaromonas naphthalenivorans (strain CJ2)).